A 256-amino-acid chain; its full sequence is Post-translational flagellin modification protein A (256 aa).

A substrate-binding site is contributed by serine 145. Residue tyrosine 168 is the Proton acceptor of the active site.

The protein belongs to the short-chain dehydrogenases/reductases (SDR) family.

Functionally, required for biosynthesis of LAH modification in the post-translational modification of Campylobacter coli flagellin. The sequence is that of Post-translational flagellin modification protein A (ptmA) from Campylobacter coli.